Consider the following 392-residue polypeptide: Formate-dependent phosphoribosylglycinamide formyltransferase (392 aa).

N(1)-(5-phospho-beta-D-ribosyl)glycinamide-binding positions include 15 to 16 (EL) and glutamate 75. Residues arginine 107, lysine 148, 153 to 158 (SSGKGQ), 188 to 191 (EEFL), and glutamate 196 each bind ATP. Positions 112 to 302 (DLASEELALL…EFELHLRAVL (191 aa)) constitute an ATP-grasp domain. Positions 261 and 273 each coordinate Mg(2+). Residues aspartate 280, lysine 350, and 357 to 358 (RR) each bind N(1)-(5-phospho-beta-D-ribosyl)glycinamide.

The protein belongs to the PurK/PurT family. In terms of assembly, homodimer.

The catalysed reaction is N(1)-(5-phospho-beta-D-ribosyl)glycinamide + formate + ATP = N(2)-formyl-N(1)-(5-phospho-beta-D-ribosyl)glycinamide + ADP + phosphate + H(+). The protein operates within purine metabolism; IMP biosynthesis via de novo pathway; N(2)-formyl-N(1)-(5-phospho-D-ribosyl)glycinamide from N(1)-(5-phospho-D-ribosyl)glycinamide (formate route): step 1/1. Its function is as follows. Involved in the de novo purine biosynthesis. Catalyzes the transfer of formate to 5-phospho-ribosyl-glycinamide (GAR), producing 5-phospho-ribosyl-N-formylglycinamide (FGAR). Formate is provided by PurU via hydrolysis of 10-formyl-tetrahydrofolate. The chain is Formate-dependent phosphoribosylglycinamide formyltransferase from Prochlorococcus marinus (strain MIT 9303).